A 436-amino-acid chain; its full sequence is Amino acid transporter AVT3C (436 aa).

Positions 1–13 (MGFQNEASSSSYT) are enriched in polar residues. The disordered stretch occupies residues 1–21 (MGFQNEASSSSYTLKIPPPAR). Topologically, residues 1-38 (MGFQNEASSSSYTLKIPPPAREDSPLLGKGPPLSSQFK) are cytoplasmic. A helical transmembrane segment spans residues 39–59 (TFANVFIAVVGAGVLGLPYAF). The Vacuolar portion of the chain corresponds to 60 to 65 (KRTGWL). A helical membrane pass occupies residues 66-86 (MGVLLLVSVSVLTHHCMMLLV). Topologically, residues 87–118 (YTRRKLDSFNAGISKIGSFGDLGFAVCGSLGR) are cytoplasmic. The helical transmembrane segment at 119 to 139 (IVVDLFIILSQAGFCVGYLIF) threads the bilayer. The Vacuolar segment spans residues 140 to 166 (IGTTLANLSDPESPTSLRHQFTRLGSE). Residues 167-187 (FLGVSSKSLYIWGCFPFQLGL) traverse the membrane as a helical segment. The Cytoplasmic portion of the chain corresponds to 188 to 195 (NSIKTLTH). The chain crosses the membrane as a helical span at residues 196–216 (LAPLSIFADIVDLGAMAVVIV). At 217 to 228 (EDSMIILKQRPD) the chain is on the vacuolar side. The helical transmembrane segment at 229–249 (VVAFGGMSLFLYGMGVAVYSF) threads the bilayer. The Cytoplasmic segment spans residues 250 to 273 (EGVGMVLPLESEMKDKDKFGKVLA). The chain crosses the membrane as a helical span at residues 274–294 (LGMGFISLIYIAFGILGYLAF). The Vacuolar portion of the chain corresponds to 295-309 (GEDTMDIITANLGAG). A helical membrane pass occupies residues 310 to 330 (LVSTVVQLGLCINLFFTFPLM). Over 331–352 (MNPVFEIVERRFSRGMYSAWLR) the chain is Cytoplasmic. The helical transmembrane segment at 353 to 373 (WVLVLAVTLVALFVPNFADFL) threads the bilayer. Residues 374–376 (SLV) lie on the Vacuolar side of the membrane. Residues 377–397 (GSSTCCVLGFVLPALFHLLVF) traverse the membrane as a helical segment. The Cytoplasmic portion of the chain corresponds to 398 to 411 (KEEMGWLQWSSDTA). A helical membrane pass occupies residues 412–432 (IVVLGVVLAVSGTWSSLSEIF). At 433–436 (SVKV) the chain is on the vacuolar side.

This sequence belongs to the amino acid/polyamine transporter 2 family. Amino acid/auxin permease (AAAP) (TC 2.A.18.8) subfamily. Ubiquitous.

The protein resides in the vacuole membrane. In terms of biological role, translocates preferentially neutral amino acids from the vacuole to the cytoplasm. This is Amino acid transporter AVT3C from Arabidopsis thaliana (Mouse-ear cress).